The primary structure comprises 278 residues: Large ribosomal subunit protein uL2 (278 aa).

Disordered stretches follow at residues 33 to 53 (LTEG…TSRG) and 219 to 278 (LTRG…KKKR). Residues 269-278 (IRSRHAKKKR) are compositionally biased toward basic residues.

Belongs to the universal ribosomal protein uL2 family. In terms of assembly, part of the 50S ribosomal subunit. Forms a bridge to the 30S subunit in the 70S ribosome.

One of the primary rRNA binding proteins. Required for association of the 30S and 50S subunits to form the 70S ribosome, for tRNA binding and peptide bond formation. It has been suggested to have peptidyltransferase activity; this is somewhat controversial. Makes several contacts with the 16S rRNA in the 70S ribosome. This is Large ribosomal subunit protein uL2 from Sphingopyxis alaskensis (strain DSM 13593 / LMG 18877 / RB2256) (Sphingomonas alaskensis).